Consider the following 142-residue polypeptide: Large ribosomal subunit protein uL11 (142 aa).

The protein belongs to the universal ribosomal protein uL11 family. As to quaternary structure, part of the ribosomal stalk of the 50S ribosomal subunit. Interacts with L10 and the large rRNA to form the base of the stalk. L10 forms an elongated spine to which L12 dimers bind in a sequential fashion forming a multimeric L10(L12)X complex. Post-translationally, one or more lysine residues are methylated.

Its function is as follows. Forms part of the ribosomal stalk which helps the ribosome interact with GTP-bound translation factors. The protein is Large ribosomal subunit protein uL11 of Haemophilus influenzae (strain PittGG).